The primary structure comprises 508 residues: Glutamate--cysteine ligase, chloroplastic (508 aa).

The N-terminal 59 residues, 1 to 59 (MTTIFRLASSSSPSLRHDATPHNFHIRKTSISNTFSFSSKNSLSFKRILTSGGSRRFIV), are a transit peptide targeting the chloroplast. Intrachain disulfides connect Cys-172-Cys-392 and Cys-335-Cys-350.

The protein belongs to the carboxylate-amine ligase family. Glutamate--cysteine ligase type 2 subfamily. Homodimer or monomer when oxidized or reduced, respectively. In terms of processing, the Cys-172-Cys-392 disulfide bridge is known to modulate the enzyme activity according to the redox status. The oxidized form constitutes the active enzyme.

It is found in the plastid. It localises to the chloroplast. It catalyses the reaction L-cysteine + L-glutamate + ATP = gamma-L-glutamyl-L-cysteine + ADP + phosphate + H(+). It participates in sulfur metabolism; glutathione biosynthesis; glutathione from L-cysteine and L-glutamate: step 1/2. This chain is Glutamate--cysteine ligase, chloroplastic (GSH1), found in Medicago truncatula (Barrel medic).